Consider the following 234-residue polypeptide: 2,3-bisphosphoglycerate-dependent phosphoglycerate mutase 1 (234 aa).

Residues 14–21, 27–28, Arg-66, and 93–96 contribute to the substrate site; these read RHGQSIWN, TG, and ERHY. The active-site Tele-phosphohistidine intermediate is His-15. Catalysis depends on Glu-93, which acts as the Proton donor/acceptor.

It belongs to the phosphoglycerate mutase family. BPG-dependent PGAM subfamily. In terms of assembly, homodimer.

The enzyme catalyses (2R)-2-phosphoglycerate = (2R)-3-phosphoglycerate. The protein operates within carbohydrate degradation; glycolysis; pyruvate from D-glyceraldehyde 3-phosphate: step 3/5. In terms of biological role, catalyzes the interconversion of 2-phosphoglycerate and 3-phosphoglycerate. The protein is 2,3-bisphosphoglycerate-dependent phosphoglycerate mutase 1 of Nitrosomonas europaea (strain ATCC 19718 / CIP 103999 / KCTC 2705 / NBRC 14298).